Here is a 790-residue protein sequence, read N- to C-terminus: Transient receptor potential cation channel subfamily V member 3 (790 aa).

The Cytoplasmic portion of the chain corresponds to 1–430 (MKAHPKEMVP…TLEPLHTLLH (430 aa)). 3 disordered regions span residues 15 to 34 (RVAA…PAEI), 52 to 71 (PNPT…MDSN), and 76 to 112 (ISGN…KEEQ). A compositionally biased stretch (polar residues) spans 95–105 (ETPSNPNSPSA). 7 ANK repeats span residues 117-148 (RRLK…LCRR), 170-198 (TCLM…EEND), 214-243 (EGQT…DVNA), 261-291 (FGET…DITS), 298-330 (NILH…RSGN), 340-362 (DGLT…YILS), and 398-420 (TTDN…HEML). A helical transmembrane segment spans residues 431–460 (MKWKKFAKHMFFLSFCFYFFYNITLTLVSY). Residues 461–479 (YRPREEEAIPHPLALTHKM) are Extracellular-facing. A helical transmembrane segment spans residues 480–508 (GWLQLLGRMFVLIWAMCISVKEGIAIFLL). Residues 509 to 519 (RPSDLQSILSD) are Cytoplasmic-facing. A helical membrane pass occupies residues 520-540 (AWFHFVFFIQAVLVILSVFLY). The Extracellular segment spans residues 541-545 (LFAYK). Residues 546–566 (EYLACLVLAMALGWANMLYYT) form a helical membrane-spanning segment. At 567–569 (RGF) the chain is on the cytoplasmic side. Residues 570-608 (QSMGMYSVMIQKVILHDVLKFLFVYIVFLLGFGVALASL) form a helical membrane-spanning segment. Topologically, residues 609–620 (IEKCPKDNKDCS) are extracellular. The pore-forming intramembrane region spans 621 to 646 (SYGSFSDAVLELFKLTIGLGDLNIQQ). Gly638 provides a ligand contact to Na(+). Residues 647–649 (NSK) are Extracellular-facing. Residues 650–686 (YPILFLFLLITYVILTFVLLLNMLIALMGETVENVSK) traverse the membrane as a helical segment. Topologically, residues 687–790 (ESERIWRLQR…EVEEFPETSV (104 aa)) are cytoplasmic.

This sequence belongs to the transient receptor (TC 1.A.4) family. TrpV subfamily. TRPV3 sub-subfamily. In terms of assembly, homotetramer. May convert from a homotetramer to a homopentamer to allow pore dilation. Interacts with TRPV1; may form a heteromeric channel with TRPV1. Interacts with SNX11; this interaction promotes TRPV3 trafficking from the cell membrane to lysosome for degradation. Abundantly expressed in CNS. Widely expressed at low levels. Detected in dorsal root ganglion (at protein level). Expressed in the keratinocyte layers of the outer root sheath and, to lesser extent, to the matrix of the hair follicles (at protein level).

The protein localises to the cell membrane. The protein resides in the cytoplasm. It is found in the lysosome. The enzyme catalyses Ca(2+)(in) = Ca(2+)(out). The catalysed reaction is Mg(2+)(in) = Mg(2+)(out). It carries out the reaction Na(+)(in) = Na(+)(out). It catalyses the reaction K(+)(in) = K(+)(out). Its activity is regulated as follows. Activated by cannabinoid that binds to the vanilloid binding pocket. Diphenylboronic anhydride induces pore dilation and enhances cation permeability by promoting the conversion to a homopentamer. In terms of biological role, non-selective calcium permeant cation channel. It is activated by innocuous (warm) temperatures and shows an increased response at noxious temperatures greater than 39 degrees Celsius. Activation exhibits an outward rectification. The channel pore can dilate to provide permeability to larger cations. May associate with TRPV1 and may modulate its activity. Is a negative regulator of hair growth and cycling: TRPV3-coupled signaling suppresses keratinocyte proliferation in hair follicles and induces apoptosis and premature hair follicle regression (catagen). This is Transient receptor potential cation channel subfamily V member 3 (TRPV3) from Homo sapiens (Human).